The following is a 472-amino-acid chain: F420-non-reducing hydrogenase subunit A (472 aa).

Positions 61, 64, 442, and 445 each coordinate Ni(2+).

Belongs to the [NiFe]/[NiFeSe] hydrogenase large subunit family. In terms of assembly, the F420-non-reducing hydrogenase is composed of three subunits; MvhA, MvhD and MvhG. It forms a complex with the heterodisulfide reductase (hdr). It depends on Ni(2+) as a cofactor.

Functionally, part of a complex that provides reducing equivalents for heterodisulfide reductase. The chain is F420-non-reducing hydrogenase subunit A (mvhA) from Methanothermobacter marburgensis (strain ATCC BAA-927 / DSM 2133 / JCM 14651 / NBRC 100331 / OCM 82 / Marburg) (Methanobacterium thermoautotrophicum).